We begin with the raw amino-acid sequence, 288 residues long: Keratin-associated protein 5-4 (288 aa).

9 tandem repeats follow at residues 49–52, 55–58, 61–64, 201–204, 220–223, 239–242, 249–252, 268–271, and 278–281. The tract at residues 49 to 281 is 9 X 4 AA repeats of C-C-X-P; it reads CCVPICCCKP…CCSQSSCCVP (233 aa).

It belongs to the KRTAP type 5 family. Interacts with hair keratins. Restricted to hair root, not detected in any other tissues.

Functionally, in the hair cortex, hair keratin intermediate filaments are embedded in an interfilamentous matrix, consisting of hair keratin-associated protein (KRTAP), which are essential for the formation of a rigid and resistant hair shaft through their extensive disulfide bond cross-linking with abundant cysteine residues of hair keratins. The matrix proteins include the high-sulfur and high-glycine-tyrosine keratins. The sequence is that of Keratin-associated protein 5-4 (KRTAP5-4) from Homo sapiens (Human).